The following is a 461-amino-acid chain: Cysteine--tRNA ligase (461 aa).

Cysteine 28 serves as a coordination point for Zn(2+). Residues 30-40 carry the 'HIGH' region motif; sequence VTIYDLCHIGH. Zn(2+) is bound by residues cysteine 209, histidine 234, and glutamate 238. Positions 266–270 match the 'KMSKS' region motif; the sequence is KMSKS. Residue lysine 269 participates in ATP binding.

It belongs to the class-I aminoacyl-tRNA synthetase family. Monomer. Requires Zn(2+) as cofactor.

Its subcellular location is the cytoplasm. The catalysed reaction is tRNA(Cys) + L-cysteine + ATP = L-cysteinyl-tRNA(Cys) + AMP + diphosphate. This Hamiltonella defensa subsp. Acyrthosiphon pisum (strain 5AT) protein is Cysteine--tRNA ligase.